Here is a 139-residue protein sequence, read N- to C-terminus: Trafficking protein particle complex subunit 2-like protein (139 aa).

The protein belongs to the TRAPP small subunits family. Sedlin subfamily. In terms of assembly, component of the multisubunit TRAPP (transport protein particle) complex, which includes at least TRAPPC2, TRAPPC2L, TRAPPC3, TRAPPC3L, TRAPPC4, TRAPPC5, TRAPPC8, TRAPPC9, TRAPPC10, TRAPPC11 and TRAPPC12. Interacts with the heterodimer TRAPPC3-TRAPPC6A.

The protein resides in the cytoplasm. It is found in the perinuclear region. The protein localises to the endoplasmic reticulum. It localises to the golgi apparatus. May play a role in vesicular transport from endoplasmic reticulum to Golgi. This chain is Trafficking protein particle complex subunit 2-like protein (Trappc2l), found in Mus musculus (Mouse).